Reading from the N-terminus, the 697-residue chain is MSDYEGSGPTEGIDYGHSMVVWPSTGLISGGDVKPGGSSGIAPSMPPGWGDYSPQGIALVQSVLFPGIIRRIILDKELEEGDWSGWSVSVHSPWGNEKVSAARTVLENGLRGGLPEPSRPAAVSFARLEPASGNEQKIIRLMVTQQLEQVTDIPASQLPAAGNNVPVKYRLMDLMQNGTQYMAIIGGIPMTVPVVDAVPVPDRSRPGTNIKDVYSAPVSPNLPDLVLSVGQMNTPVLSNPEIQEEGVIAETGNYVEAGYTMSSNNHDVIVRFPEGSDVSPLYISTVEILDSNGLSQRQEAENKAKDDFRVKKEEAVARAEAEKAKAELFSKAGVNQPPVYTQEMMERANSVMNEQGALVLNNTASSVQLAMTGTGVWTAAGDIAGNISKFFSNALEKVTIPEVSPLLMRISLGALWFHSEEAGAGSDIVPGRNLEAMFSLSAQMLAGQGVVIEPGATSVNLPVRGQLINSNGQLALDLLKTGNESIPAAVPVLNAVRDTATGLDKITLPAVVGAPSRTILVNPVPQPSVPTDTGNHQPVPVTPVHTGTEVKSVEMPVTTITPVSDVGGLRDFIYWRPDAAGTGVEAVYVMLNDPLDSGRFSRKQLDKKYKHAGDFGISDTKKNRETLTKFRDAIEEHLSDKDTVEKGTYRREKGSKVYFNPNTMNVVIIKSNGEFLSGWKINPDADNGRIYLETGEL.

Positions 17–24 match the TonB box motif; the sequence is HSMVVWPS.

This sequence belongs to the cloacin colicin family.

In terms of biological role, colicins are polypeptide toxins produced by and active against E.coli and closely related bacteria. Functionally, colicin D inhibits protein synthesis. The sequence is that of Colicin-D (cda) from Escherichia coli.